Consider the following 468-residue polypeptide: Protein CA_C1420 (468 aa).

Positions 1 to 289 are unknown; it reads MSLNGFYLLP…LKELERIRKD (289 aa). The AMMECR1 domain maps to 296–468; sequence QEKDPYVKLA…KFMVTRHKES (173 aa).

In Clostridium acetobutylicum (strain ATCC 824 / DSM 792 / JCM 1419 / IAM 19013 / LMG 5710 / NBRC 13948 / NRRL B-527 / VKM B-1787 / 2291 / W), this protein is Protein CA_C1420.